Here is a 424-residue protein sequence, read N- to C-terminus: UDP-N-acetylglucosamine 1-carboxyvinyltransferase (424 aa).

A phosphoenolpyruvate-binding site is contributed by 22 to 23; it reads KN. UDP-N-acetyl-alpha-D-glucosamine is bound at residue R93. C117 serves as the catalytic Proton donor. C117 bears the 2-(S-cysteinyl)pyruvic acid O-phosphothioketal mark. Residues 122–126, D307, and V329 each bind UDP-N-acetyl-alpha-D-glucosamine; that span reads RPIDL.

It belongs to the EPSP synthase family. MurA subfamily.

It is found in the cytoplasm. The enzyme catalyses phosphoenolpyruvate + UDP-N-acetyl-alpha-D-glucosamine = UDP-N-acetyl-3-O-(1-carboxyvinyl)-alpha-D-glucosamine + phosphate. It participates in cell wall biogenesis; peptidoglycan biosynthesis. In terms of biological role, cell wall formation. Adds enolpyruvyl to UDP-N-acetylglucosamine. The polypeptide is UDP-N-acetylglucosamine 1-carboxyvinyltransferase (Pelodictyon phaeoclathratiforme (strain DSM 5477 / BU-1)).